A 142-amino-acid chain; its full sequence is Hemoglobin subunit alpha (142 aa).

The Globin domain maps to 2–142 (VLSPADKSNV…VSTVLTSKYR (141 aa)). Ser-4 is subject to Phosphoserine. An N6-succinyllysine mark is found at Lys-8 and Lys-12. Lys-17 is subject to N6-acetyllysine; alternate. Lys-17 is subject to N6-succinyllysine; alternate. Residue Tyr-25 is modified to Phosphotyrosine. Ser-36 carries the post-translational modification Phosphoserine. Position 41 is an N6-succinyllysine (Lys-41). Residue Ser-50 is modified to Phosphoserine. An O2-binding site is contributed by His-59. His-88 is a binding site for heme b. Ser-103 carries the post-translational modification Phosphoserine. At Thr-109 the chain carries Phosphothreonine. Residues Ser-125 and Ser-132 each carry the phosphoserine modification. Thr-135 and Thr-138 each carry phosphothreonine. Ser-139 carries the phosphoserine modification.

The protein belongs to the globin family. As to quaternary structure, heterotetramer of two alpha chains and two beta chains. In terms of tissue distribution, red blood cells.

Involved in oxygen transport from the lung to the various peripheral tissues. Functionally, hemopressin acts as an antagonist peptide of the cannabinoid receptor CNR1. Hemopressin-binding efficiently blocks cannabinoid receptor CNR1 and subsequent signaling. The protein is Hemoglobin subunit alpha (HBA) of Macaca fuscata fuscata (Japanese macaque).